The chain runs to 340 residues: Phospho-N-acetylmuramoyl-pentapeptide-transferase (340 aa).

9 helical membrane passes run 22–42, 69–89, 95–115, 129–149, 156–176, 186–206, 209–229, 235–257, and 316–336; these read VVVP…LLIP, TMGG…WSGW, AVAL…WLVI, LLLQ…QGIP, GIGT…VLVG, GMDG…GLLH, PELS…LVHN, LFMG…LLGD, and VVGS…AWWH.

This sequence belongs to the glycosyltransferase 4 family. MraY subfamily. It depends on Mg(2+) as a cofactor.

It is found in the cell inner membrane. The enzyme catalyses UDP-N-acetyl-alpha-D-muramoyl-L-alanyl-gamma-D-glutamyl-meso-2,6-diaminopimeloyl-D-alanyl-D-alanine + di-trans,octa-cis-undecaprenyl phosphate = di-trans,octa-cis-undecaprenyl diphospho-N-acetyl-alpha-D-muramoyl-L-alanyl-D-glutamyl-meso-2,6-diaminopimeloyl-D-alanyl-D-alanine + UMP. The protein operates within cell wall biogenesis; peptidoglycan biosynthesis. Functionally, catalyzes the initial step of the lipid cycle reactions in the biosynthesis of the cell wall peptidoglycan: transfers peptidoglycan precursor phospho-MurNAc-pentapeptide from UDP-MurNAc-pentapeptide onto the lipid carrier undecaprenyl phosphate, yielding undecaprenyl-pyrophosphoryl-MurNAc-pentapeptide, known as lipid I. The protein is Phospho-N-acetylmuramoyl-pentapeptide-transferase of Synechococcus sp. (strain JA-2-3B'a(2-13)) (Cyanobacteria bacterium Yellowstone B-Prime).